The primary structure comprises 977 residues: Mast/stem cell growth factor receptor Kit (977 aa).

The signal sequence occupies residues 1–25 (MRGARGAWDFLFVLLLLLLVQTGSS). Residues 26-525 (QPSVSPGELS…QIHAHTLFTP (500 aa)) lie on the Extracellular side of the membrane. Ig-like C2-type domains are found at residues 27 to 112 (PSVS…VFVR), 121 to 205 (DLPL…LKVR), 212 to 309 (PVVS…LEVV), 318 to 411 (PMMN…VYVN), and 414 to 508 (PEIL…FNFA). Cysteines 58 and 97 form a disulfide. Residues N94, N130, and N145 are each glycosylated (N-linked (GlcNAc...) asparagine). 3 cysteine pairs are disulfide-bonded: C136-C186, C151-C183, and C233-C291. N284, N294, N301, N321, N353, N368, N401, N464, and N487 each carry an N-linked (GlcNAc...) asparagine glycan. Residues C429 and C492 are joined by a disulfide bond. The helical transmembrane segment at 526 to 546 (LLIGFVIAAGLMCIFVMILTY) threads the bilayer. At 547–977 (KYLQKPMYEV…TQPLLVHEDV (431 aa)) the chain is on the cytoplasmic side. A phosphotyrosine mark is found at Y548 and Y554. Y569 is a binding site for Mg(2+). A phosphotyrosine; by autocatalysis mark is found at Y569 and Y571. Residues 569-571 (YVY) are important for interaction with phosphotyrosine-binding proteins. Residues 590 to 938 (LSFGKTLGAG…ISESTNHIYS (349 aa)) enclose the Protein kinase domain. Residues 597-604 (GAGAFGKV), K624, and 672-678 (EYCCYGD) each bind ATP. A phosphotyrosine; by autocatalysis mark is found at Y704 and Y722. Phosphotyrosine is present on Y731. A phosphoserine; by PKC/PRKCA mark is found at S742 and S747. D793 acts as the Proton acceptor in catalysis. Position 797 (R797) interacts with ATP. Positions 798 and 811 each coordinate Mg(2+). Phosphoserine is present on S822. Residue Y824 is modified to Phosphotyrosine; by autocatalysis. A Phosphoserine modification is found at S892. A Phosphotyrosine modification is found at Y901. At Y937 the chain carries Phosphotyrosine; by autocatalysis. S960 bears the Phosphoserine mark.

It belongs to the protein kinase superfamily. Tyr protein kinase family. CSF-1/PDGF receptor subfamily. As to quaternary structure, monomer in the absence of bound KITLG/SCF. Homodimer in the presence of bound KITLG/SCF, forming a heterotetramer with two KITLG/SCF molecules. Interacts (via phosphorylated tyrosine residues) with the adapter proteins GRB2 and GRB7 (via SH2 domain), and SH2B2/APS. Interacts (via C-terminus) with MPDZ (via the tenth PDZ domain). Interacts (via phosphorylated tyrosine residues) with PIK3R1 and PIK3CD. Interacts (via phosphorylated tyrosine) with CRK (isoform Crk-II), FYN, SHC1 and MATK/CHK (via SH2 domain). Interacts with LYN and FES/FPS. Interacts (via phosphorylated tyrosine residues) with the protein phosphatases PTPN6/SHP-1 (via SH2 domain), PTPN11/SHP-2 (via SH2 domain) and PTPRU. Interacts with PLCG1. Interacts with DOK1 and TEC. Interacts with IL1RAP (independent of stimulation with KITLG/SCF). A mast cell-specific KITLG/SCF-induced interleukin-33 signaling complex contains IL1RL1, IL1RAP, KIT and MYD88. Post-translationally, ubiquitinated by SOCS6. KIT is rapidly ubiquitinated after autophosphorylation induced by KITLG/SCF binding, leading to internalization and degradation. Autophosphorylated on tyrosine residues. KITLG/SCF binding promotes autophosphorylation. Phosphorylated tyrosine residues are important for interaction with specific binding partners.

Its subcellular location is the cell membrane. It catalyses the reaction L-tyrosyl-[protein] + ATP = O-phospho-L-tyrosyl-[protein] + ADP + H(+). With respect to regulation, present in an inactive conformation in the absence of bound ligand. KITLG/SCF binding leads to dimerization and activation by autophosphorylation on tyrosine residues. Activity is down-regulated by PRKCA-mediated phosphorylation on serine residues. Its function is as follows. Tyrosine-protein kinase that acts as a cell-surface receptor for the cytokine KITLG/SCF and plays an essential role in the regulation of cell survival and proliferation, hematopoiesis, stem cell maintenance, gametogenesis, mast cell development, migration and function, and in melanogenesis. In response to KITLG/SCF binding, KIT can activate several signaling pathways. Phosphorylates PIK3R1, PLCG1, SH2B2/APS and CBL. Activates the AKT1 signaling pathway by phosphorylation of PIK3R1, the regulatory subunit of phosphatidylinositol 3-kinase. Activated KIT also transmits signals via GRB2 and activation of RAS, RAF1 and the MAP kinases MAPK1/ERK2 and/or MAPK3/ERK1. Promotes activation of STAT family members STAT1, STAT3, STAT5A and STAT5B. Activation of PLCG1 leads to the production of the cellular signaling molecules diacylglycerol and inositol 1,4,5-trisphosphate. KIT signaling is modulated by protein phosphatases, and by rapid internalization and degradation of the receptor. Activated KIT promotes phosphorylation of the protein phosphatases PTPN6/SHP-1 and PTPRU, and of the transcription factors STAT1, STAT3, STAT5A and STAT5B. Promotes phosphorylation of PIK3R1, CBL, CRK (isoform Crk-II), LYN, MAPK1/ERK2 and/or MAPK3/ERK1, PLCG1, SRC and SHC1. This chain is Mast/stem cell growth factor receptor Kit (KIT), found in Bos taurus (Bovine).